Here is a 414-residue protein sequence, read N- to C-terminus: COUP transcription factor 2 (414 aa).

The tract at residues 1–72 (MAMVVSTWRD…PGGPGSDKQQ (72 aa)) is disordered. Pro residues predominate over residues 27–37 (PPVPGPPPGAP). Residues 38–57 (HTPQTPGQGGPASTPAQTAA) are compositionally biased toward low complexity. The residue at position 51 (Thr-51) is a Phosphothreonine. Residues 58 to 67 (GGQGGPGGPG) show a composition bias toward gly residues. The nuclear receptor DNA-binding region spans 76 to 151 (HIECVVCGDK…VGMRREAVQR (76 aa)). 2 consecutive NR C4-type zinc fingers follow at residues 79 to 99 (CVVCGDKSSGKHYGQFTCEGC) and 115 to 139 (CRANRNCPIDQHHRNQCQYCRLKKC). An interaction with ZFPM2 region spans residues 117–414 (ANRNCPIDQH…SFNWPYMAIQ (298 aa)). Residues 177–403 (YLSGYISLLL…TLIRDMLLSG (227 aa)) form the NR LBD domain. Residues 337–414 (LQEKSQCALE…SFNWPYMAIQ (78 aa)) are important for dimerization.

Belongs to the nuclear hormone receptor family. NR2 subfamily. In terms of assembly, interacts with SQSTM1. Binds DNA as a dimer; homodimer or heterodimer with NR2F6. Interacts with NCOA1, NCOA2, NCOA3 and PPARGC1A. Interacts with ZFPM2.

It localises to the nucleus. Ligand-activated transcription factor. Activated by high concentrations of 9-cis-retinoic acid and all-trans-retinoic acid, but not by dexamethasone, cortisol or progesterone (in vitro). Regulation of the apolipoprotein A-I gene transcription. Binds to DNA site A. May be required to establish ovary identity during early gonad development. This chain is COUP transcription factor 2 (NR2F2), found in Bos taurus (Bovine).